Consider the following 181-residue polypeptide: Inorganic pyrophosphatase 2 (181 aa).

Substrate contacts are provided by Lys30, Arg44, and Tyr56. Mg(2+) is bound by residues Asp66, Asp71, and Asp103. Substrate is bound at residue Tyr142.

This sequence belongs to the PPase family. In terms of assembly, homohexamer. It depends on Mg(2+) as a cofactor.

It localises to the cytoplasm. The catalysed reaction is diphosphate + H2O = 2 phosphate + H(+). Functionally, catalyzes the hydrolysis of inorganic pyrophosphate (PPi) forming two phosphate ions. The polypeptide is Inorganic pyrophosphatase 2 (Pseudomonas syringae pv. tomato (strain ATCC BAA-871 / DC3000)).